The following is a 558-amino-acid chain: Formate--tetrahydrofolate ligase (558 aa).

Residue 66–73 participates in ATP binding; sequence TPAGEGKT.

Belongs to the formate--tetrahydrofolate ligase family.

It catalyses the reaction (6S)-5,6,7,8-tetrahydrofolate + formate + ATP = (6R)-10-formyltetrahydrofolate + ADP + phosphate. It functions in the pathway one-carbon metabolism; tetrahydrofolate interconversion. The chain is Formate--tetrahydrofolate ligase from Clostridium kluyveri (strain NBRC 12016).